The following is a 274-amino-acid chain: uncharacterized protein (274 aa).

The next 5 membrane-spanning stretches (helical) occupy residues Ser-9–Leu-29, Trp-64–Leu-84, Leu-135–Leu-155, Met-165–Ala-185, and Ile-219–Gly-239.

This sequence belongs to the steroid 5-alpha reductase family.

It is found in the endoplasmic reticulum membrane. This is an uncharacterized protein from Schizosaccharomyces pombe (strain 972 / ATCC 24843) (Fission yeast).